Consider the following 1425-residue polypeptide: MKNKGAKQKLKRKGAASAFGCDLTEYLESSGQDVPYVLKSCAEFIETHGIVDGIYRLSGITSNIQRLRQEFGSDQCPDLTREVYLQDIHCVGSLCKLYFRELPNPLLTYELYEKFTEAVSHRPEEGQLARIQNVILELPPPHYRTLEYLIRHLAHIASFSSKTNMHARNLALVWAPNLLRSKKIEATICNGDAAFLAVRVQQVVIEFILNHADQIFNGGAPGALQQDESRTITKSLTLPALSLPMKLVSLEEAQARSLATNHPARKERRENSLPEIVPPPFHTVLELPDNKRKLSSKSKKWKSIFNLGRSGSDSKSKLSRNGSVFVRGQRLSVEKATIRPAKSMDSLCSVPVEGKENKGNFSRTVTTGGFFIPATKMHASSTGSSCDLSKEGEWGQEGMPAGAEGGCEVGGQIRPLPEQLKVFRPIGDPESEQSAPKLLGMFYTSSDSPGKSVFTSSLFQMEPSPRHQRKALNISEPFAVSVPLRVSAVISTNSTPCRTPPKELQSLSSLEEFSFQGSESGGWPEEEKPLGAESFPGSVTKKAATEDTKPEPEVPGRAECSQSPPLDPGTQVEKKTLHVSLGSQVSKEAEKRPKAEKVMEESQGASQPKPSTPQESLGAGTEPLILHEMDEEDLAQALIWPEIQQELKIIESEEEFSSLPPAAQKTSPIPESSPAPFPFPEAPGSLPSSSAPREVWTRDAANQSIQEAAILTDREKLEPVCSLLESESQQELSPDPASLAPLEMLLFEKVSSPARIEIGGPRNLSPPLTPAPPPPTPLEEEPEVLLSKEGPDREDAARDSRTDVYTEQPTPKESPGIPTPCQREEAIASPNEKQNARHAVPENKGPGLPSPTKEVDIIPQEEGGAPHSAQEPSDCDEDDTVTDPAQHGLEMVEPWEEPQWVTSPLHSPTLKEVQESQTQGSQGHRLERRLCHRPSLRQSHSLDSKTTGNSHWTLEAPFSSSCANLETERNYEPLQPPAARTKIAGLEEKALKAFREFSGLKGLEVLPSQKGPSGIQPKPVETNFMGLAEGKEQEPQLELSNRQMKHSDVPGPDSSKESSPRAQDSTLPGEHPLQLQLKNTECGPSKGKHRPSSLNLDSATPIADLFRLENGAPFSSPGIELSELGDTKVTWMSSSHCKAAPWNSQDTQDLDIVAHTLTGRRNSAPVSVSAVRTSFMVKMCQAKAVPVIPPKIQYTQIPQPLPSQSTGEGGAQPLERSQEEPGSTPEIPQKSTKDDSPSSLGSPEEEQPKQETGASASRRQASITSCMYEGSSCSPEPSASTLASTQDAVVQCRKRTSETEPSGDNLLSSKLERASGGPKAFHRSRPGRPQSLILFPIMDHLPSSPTVIDSKVLLSPIRSPTQTVSPGLLCGELAENTWITPEGVTLRNKMTIPKNGQRLETSTSCFYQPQRRSVILDGRSGRQIE.

A Rho-GAP domain is found at 21–216; that stretch reads CDLTEYLESS…FILNHADQIF (196 aa). The segment at 258–277 is disordered; the sequence is LATNHPARKERRENSLPEIV. Ser-272 carries the phosphoserine modification. Residue Thr-283 is modified to Phosphothreonine. Phosphoserine occurs at positions 343, 346, 384, and 464. Residues 511–522 show a composition bias toward low complexity; that stretch reads EEFSFQGSESGG. Disordered stretches follow at residues 511-621, 652-700, and 756-951; these read EEFS…GAGT, SEEE…TRDA, and IEIG…GNSH. 2 stretches are compositionally biased toward basic and acidic residues: residues 543–556 and 587–600; these read AATE…EVPG and KEAE…KVME. Polar residues predominate over residues 603–615; the sequence is QGASQPKPSTPQE. A Phosphothreonine modification is found at Thr-666. Residues 671–681 show a composition bias toward pro residues; it reads ESSPAPFPFPE. Residues Ser-685, Ser-690, and Ser-765 each carry the phosphoserine modification. Residues 767–777 are compositionally biased toward pro residues; that stretch reads PLTPAPPPPTP. Thr-769 is modified (phosphothreonine). Phosphothreonine; by GSK3 is present on Thr-776. Residues 789-804 show a composition bias toward basic and acidic residues; the sequence is EGPDREDAARDSRTDV. The segment covering 936-951 has biased composition (polar residues); that stretch reads LRQSHSLDSKTTGNSH. Phosphoserine is present on residues Ser-961, Ser-1092, Ser-1093, and Ser-1163. Residues 1031-1095 are disordered; that stretch reads KEQEPQLELS…KGKHRPSSLN (65 aa). 3 stretches are compositionally biased toward polar residues: residues 1196–1206, 1250–1260, and 1299–1308; these read QIPQPLPSQST, QETGASASRRQ, and TEPSGDNLLS. 2 disordered regions span residues 1196–1260 and 1291–1327; these read QIPQ…SRRQ and QCRK…SRPG.

In terms of assembly, interacts with ITSN1, which inhibits GAP activity. Interacts with PARVA. Interacts with GTP-loaded RHOU. Phosphorylated on Thr-776 by GSK3; which reduces GAP activity. As to expression, expressed at highest levels in heart and lung.

Its subcellular location is the cell projection. The protein localises to the lamellipodium. It is found in the cell junction. It localises to the focal adhesion. Its function is as follows. Functions as a GTPase-activating protein (GAP) for RAC1 and CDC42. Required for cell spreading, polarized lamellipodia formation and cell migration. The sequence is that of Rho GTPase-activating protein 31 (Arhgap31) from Mus musculus (Mouse).